The following is a 65-amino-acid chain: Large ribosomal subunit protein bL35 (65 aa).

This sequence belongs to the bacterial ribosomal protein bL35 family.

The protein is Large ribosomal subunit protein bL35 of Nostoc sp. (strain PCC 7120 / SAG 25.82 / UTEX 2576).